Here is a 606-residue protein sequence, read N- to C-terminus: NADH-ubiquinone oxidoreductase chain 5 (606 aa).

The next 16 membrane-spanning stretches (helical) occupy residues 1 to 21, 35 to 55, 87 to 107, 114 to 134, 140 to 160, 171 to 191, 211 to 233, 241 to 261, 272 to 292, 301 to 320, 325 to 347, 366 to 386, 413 to 433, 457 to 477, 482 to 502, and 582 to 602; these read MNLFTSFVLLTLLILFTPIMV, YVKNIVFCAFITSLIPAMMYL, LMFMPVALFITWSIMEFSMWY, INQFFKYLLLFLITMLILVTA, LFIGWEGVGIMSFLLIGWWFG, AILYNRIGDIGLLASMAWFLS, FPLMGLVLAAAGKSAQFGLHPWL, TPVSALLHSSTMVVAGIFLLV, LIQTVTLCLGAITTLFTAICA, IIAFSTSSQLGLMMVTIGLN, AFLHICTHAFFKAMLFLCSGSII, LPFTTTALIIGCLALTGMPFL, LTATSLTAVYSTRIIFFALLG, LLIGSIFAGFILSNSIPPVIT, MPLHLKLTALTMTTLGFIIAF, and GLIKLYFLSFLITITLSMILF.

The protein belongs to the complex I subunit 5 family. Core subunit of respiratory chain NADH dehydrogenase (Complex I) which is composed of 45 different subunits.

Its subcellular location is the mitochondrion inner membrane. The enzyme catalyses a ubiquinone + NADH + 5 H(+)(in) = a ubiquinol + NAD(+) + 4 H(+)(out). Core subunit of the mitochondrial membrane respiratory chain NADH dehydrogenase (Complex I) which catalyzes electron transfer from NADH through the respiratory chain, using ubiquinone as an electron acceptor. Essential for the catalytic activity and assembly of complex I. In Balaenoptera musculus (Blue whale), this protein is NADH-ubiquinone oxidoreductase chain 5 (MT-ND5).